The primary structure comprises 779 residues: Ribonucleoside-diphosphate reductase large subunit (779 aa).

Residues S178, 193-194 (SC), G222, 420-424 (NLCIE), and 614-618 (PTATS) each bind substrate. Cysteines 194 and 440 form a disulfide. Catalysis depends on N420, which acts as the Proton acceptor. C422 acts as the Cysteine radical intermediate in catalysis. E424 acts as the Proton acceptor in catalysis.

This sequence belongs to the ribonucleoside diphosphate reductase large chain family. Heterotetramer composed of a homodimer of the large subunit (R1) and a homodimer of the small subunit (R2). Larger multisubunit protein complex are also active, composed of (R1)n(R2)n.

It carries out the reaction a 2'-deoxyribonucleoside 5'-diphosphate + [thioredoxin]-disulfide + H2O = a ribonucleoside 5'-diphosphate + [thioredoxin]-dithiol. With respect to regulation, under complex allosteric control mediated by deoxynucleoside triphosphates and ATP binding. The type of nucleotide bound at the specificity site determines substrate preference. It seems probable that ATP makes the enzyme reduce CDP and UDP, dGTP favors ADP reduction and dTTP favors GDP reduction. Ribonucleoside-diphosphate reductase holoenzyme provides the precursors necessary for viral DNA synthesis. Allows virus growth in non-dividing cells. Catalyzes the biosynthesis of deoxyribonucleotides from the corresponding ribonucleotides. This is Ribonucleoside-diphosphate reductase large subunit from Ornithodoros (relapsing fever ticks).